Consider the following 310-residue polypeptide: Fe-S cluster assembly protein dre2 (310 aa).

2 disordered regions span residues 1–30 and 165–184; these read MAPSFVSIDTTPDFDMTPTSSKSADSGKRT and APAPAPVVQPPPIISSDDND. The interval 24 to 154 is N-terminal SAM-like domain; sequence ADSGKRTLLL…KMDVGNGAAV (131 aa). A linker region spans residues 155–202; the sequence is PLRLGRKKKAAPAPAPVVQPPPIISSDDNDLNDDELIDEDTLLSADDL. Over residues 167–177 the composition is skewed to pro residues; that stretch reads APAPVVQPPPI. Residues Cys-212, Cys-223, Cys-226, and Cys-228 each coordinate [2Fe-2S] cluster. Residues 212 to 228 form a fe-S binding site A region; that stretch reads CQPKAGKRRRACKDCTC. [4Fe-4S] cluster is bound by residues Cys-273, Cys-276, Cys-284, and Cys-287. Short sequence motifs (cx2C motif) lie at residues 273-276 and 284-287; these read CGNC and CDGC. Residues 273-287 form a fe-S binding site B region; it reads CGNCALGDAFRCDGC.

It belongs to the anamorsin family. In terms of assembly, monomer. Interacts with tah18. Interacts with mia40. [2Fe-2S] cluster serves as cofactor. It depends on [4Fe-4S] cluster as a cofactor.

Its subcellular location is the cytoplasm. It is found in the mitochondrion intermembrane space. In terms of biological role, component of the cytosolic iron-sulfur (Fe-S) protein assembly (CIA) machinery required for the maturation of extramitochondrial Fe-S proteins. Part of an electron transfer chain functioning in an early step of cytosolic Fe-S biogenesis, facilitating the de novo assembly of a [4Fe-4S] cluster on the scaffold complex cfd1-nbp35. Electrons are transferred to dre2 from NADPH via the FAD- and FMN-containing protein tah18. Tah18-dre2 are also required for the assembly of the diferric tyrosyl radical cofactor of ribonucleotide reductase (RNR), probably by providing electrons for reduction during radical cofactor maturation in the catalytic small subunit rnr2. This is Fe-S cluster assembly protein dre2 from Emericella nidulans (strain FGSC A4 / ATCC 38163 / CBS 112.46 / NRRL 194 / M139) (Aspergillus nidulans).